Reading from the N-terminus, the 750-residue chain is Photosystem I P700 chlorophyll a apoprotein A1 (750 aa).

Transmembrane regions (helical) follow at residues 70–93 (VFSAHFGQLSIIFLWLSGMYFHGA), 156–179 (LYCTAIGALVFAALMLFAGWFHYH), 195–219 (LNHHLTGLLGLGSLSWAGHQIHVSL), 291–309 (IIHHHLAIAILFLIAGHMY), 346–369 (WHAQLSINLAMLGSLTIVVAHHMY), 385–411 (LSLFTHHMWIGGFLIVGAAAHAAIFMV), 433–455 (AIISHLNWVCIFLGFHSFGLYIH), and 531–549 (FLVHHIHAFTIHVTVLILL). Residues C573 and C582 each coordinate [4Fe-4S] cluster. A run of 2 helical transmembrane segments spans residues 589-610 (HVFLGLFWMYNSISVVIFHFSW) and 664-686 (LSAYGLFFLGAHFVWAFSLMFLF). Chlorophyll a' is bound at residue H675. Chlorophyll a contacts are provided by M683 and Y691. Residue W692 coordinates phylloquinone. A helical transmembrane segment spans residues 724–744 (AVGVTHYLLGGIATTWAFFLA).

Belongs to the PsaA/PsaB family. The PsaA/B heterodimer binds the P700 chlorophyll special pair and subsequent electron acceptors. PSI consists of a core antenna complex that captures photons, and an electron transfer chain that converts photonic excitation into a charge separation. The eukaryotic PSI reaction center is composed of at least 11 subunits. The cofactor is P700 is a chlorophyll a/chlorophyll a' dimer, A0 is one or more chlorophyll a, A1 is one or both phylloquinones and FX is a shared 4Fe-4S iron-sulfur center..

It is found in the plastid. The protein resides in the chloroplast thylakoid membrane. It catalyses the reaction reduced [plastocyanin] + hnu + oxidized [2Fe-2S]-[ferredoxin] = oxidized [plastocyanin] + reduced [2Fe-2S]-[ferredoxin]. Functionally, psaA and PsaB bind P700, the primary electron donor of photosystem I (PSI), as well as the electron acceptors A0, A1 and FX. PSI is a plastocyanin-ferredoxin oxidoreductase, converting photonic excitation into a charge separation, which transfers an electron from the donor P700 chlorophyll pair to the spectroscopically characterized acceptors A0, A1, FX, FA and FB in turn. Oxidized P700 is reduced on the lumenal side of the thylakoid membrane by plastocyanin. This is Photosystem I P700 chlorophyll a apoprotein A1 from Phaseolus vulgaris (Kidney bean).